The following is a 324-amino-acid chain: MSGSGDREILLIAHPGRAEIVETAHRAAKIFTEAGIGLRVLADEAPSTRFDSRAEPAPVTGPAGDAVRVVEHSAAAAVGCEMVLALGGDGTFLRAAELARPASVPVLGINLGRIGFLTEAEAEHLDEALGQVVRGDYRVEDRMTIDVTVRVEDEVVESGWALNEASIENASRMGVLEVVLEVDGRPVSAFGCDGILIATPTGSTAYAFSAGGPVVWPELEALLVIPSNAHALFARPLVTSPESRIAVESVATGHDAIVFLDGRRTLALPRGGRVEAVRGSEPVRWVRLDSAPFADRMVRKFQLPVTGWRGRRRTESTRADRDQD.

The Proton acceptor role is filled by D89. NAD(+)-binding positions include 89-90, R94, 163-164, D193, and 204-209; these read DG, NE, and TAYAFS.

The protein belongs to the NAD kinase family. A divalent metal cation serves as cofactor.

The protein resides in the cytoplasm. The enzyme catalyses NAD(+) + ATP = ADP + NADP(+) + H(+). Functionally, involved in the regulation of the intracellular balance of NAD and NADP, and is a key enzyme in the biosynthesis of NADP. Catalyzes specifically the phosphorylation on 2'-hydroxyl of the adenosine moiety of NAD to yield NADP. This chain is NAD kinase, found in Nocardia farcinica (strain IFM 10152).